Consider the following 182-residue polypeptide: Large ribosomal subunit protein uL6 (182 aa).

This sequence belongs to the universal ribosomal protein uL6 family. Part of the 50S ribosomal subunit.

In terms of biological role, this protein binds to the 23S rRNA, and is important in its secondary structure. It is located near the subunit interface in the base of the L7/L12 stalk, and near the tRNA binding site of the peptidyltransferase center. This chain is Large ribosomal subunit protein uL6, found in Nostoc punctiforme (strain ATCC 29133 / PCC 73102).